Consider the following 357-residue polypeptide: Mitochondrial carrier protein LEU5 (357 aa).

The next 6 helical transmembrane spans lie at 31-47 (DYIVRSGLAGGISGSCA), 103-119 (LRIFPYAAVKFVAYEQI), 136-153 (LVSGSLAGLCSVFITYPL), 208-228 (VPTVLGMIPYAGVSFFAHDLL), 269-285 (ISGGLAGMASQTAAYPF), and 325-347 (GFFVGLSIGYIKVTPMVACSFFV). Solcar repeat units lie at residues 31 to 122 (DYIV…IRNT), 130 to 231 (ESHW…LHDV), and 262 to 354 (LRTW…MKWN).

It belongs to the mitochondrial carrier (TC 2.A.29) family.

It is found in the mitochondrion inner membrane. Functionally, required for the accumulation of coenzyme A in the mitochondrial matrix. The chain is Mitochondrial carrier protein LEU5 (LEU5) from Saccharomyces cerevisiae (strain ATCC 204508 / S288c) (Baker's yeast).